The primary structure comprises 69 residues: Large ribosomal subunit protein bL28 (69 aa).

This sequence belongs to the bacterial ribosomal protein bL28 family.

This Lawsonia intracellularis (strain PHE/MN1-00) protein is Large ribosomal subunit protein bL28.